The following is a 468-amino-acid chain: 6-phospho-beta-galactosidase (468 aa).

D-galactose 6-phosphate contacts are provided by Q19, H116, N159, E160, and N297. E160 (proton donor) is an active-site residue. The active-site Nucleophile is E375. The D-galactose 6-phosphate site is built by S428, W429, K435, and Y437.

Belongs to the glycosyl hydrolase 1 family.

It catalyses the reaction a 6-phospho-beta-D-galactoside + H2O = D-galactose 6-phosphate + an alcohol. Its pathway is carbohydrate metabolism; lactose degradation; D-galactose 6-phosphate and beta-D-glucose from lactose 6-phosphate: step 1/1. The chain is 6-phospho-beta-galactosidase from Streptococcus gordonii (strain Challis / ATCC 35105 / BCRC 15272 / CH1 / DL1 / V288).